The following is a 365-amino-acid chain: DNA replication and repair protein RecF (365 aa).

30–37 serves as a coordination point for ATP; sequence GLNAQGKT.

Belongs to the RecF family.

Its subcellular location is the cytoplasm. The RecF protein is involved in DNA metabolism; it is required for DNA replication and normal SOS inducibility. RecF binds preferentially to single-stranded, linear DNA. It also seems to bind ATP. This chain is DNA replication and repair protein RecF, found in Chlamydia trachomatis serovar L2b (strain UCH-1/proctitis).